The primary structure comprises 266 residues: Ribonuclease 3 (266 aa).

Positions 8–130 (LARLTKKLGY…IIGAVYLDSN (123 aa)) constitute an RNase III domain. Glu43 contributes to the Mg(2+) binding site. Asp47 is a catalytic residue. 2 residues coordinate Mg(2+): Asp116 and Glu119. Glu119 is an active-site residue. The 71-residue stretch at 157 to 227 (DPKTRLQEFL…AQQILALIEK (71 aa)) folds into the DRBM domain. The interval 229-266 (REQEKEVKIKPTKQAKLANPRHTKSNPSSSSKKSSTRK) is disordered. Over residues 253–266 (SNPSSSSKKSSTRK) the composition is skewed to low complexity.

This sequence belongs to the ribonuclease III family. In terms of assembly, homodimer. Mg(2+) is required as a cofactor.

It is found in the cytoplasm. It carries out the reaction Endonucleolytic cleavage to 5'-phosphomonoester.. Digests double-stranded RNA. Involved in the processing of primary rRNA transcript to yield the immediate precursors to the large and small rRNAs (23S and 16S). Processes some mRNAs, and tRNAs when they are encoded in the rRNA operon. Processes pre-crRNA and tracrRNA of type II CRISPR loci if present in the organism. The protein is Ribonuclease 3 of Colwellia psychrerythraea (strain 34H / ATCC BAA-681) (Vibrio psychroerythus).